We begin with the raw amino-acid sequence, 527 residues long: Probable protein kinase UbiB (527 aa).

One can recognise a Protein kinase domain in the interval 123–527 (EFNETALASA…AIWLLIYLLS (405 aa)). Residues 129–137 (LASASIAQV) and K161 each bind ATP. D296 functions as the Proton acceptor in the catalytic mechanism. Residues 506–526 (FTSFILGLCTGLAIWLLIYLL) traverse the membrane as a helical segment.

The protein belongs to the ABC1 family. UbiB subfamily.

The protein localises to the cell inner membrane. The protein operates within cofactor biosynthesis; ubiquinone biosynthesis [regulation]. Functionally, is probably a protein kinase regulator of UbiI activity which is involved in aerobic coenzyme Q (ubiquinone) biosynthesis. The sequence is that of Probable protein kinase UbiB from Pasteurella multocida (strain Pm70).